The chain runs to 100 residues: Small ribosomal subunit protein uS14c (100 aa).

Belongs to the universal ribosomal protein uS14 family. As to quaternary structure, part of the 30S ribosomal subunit.

It is found in the plastid. The protein localises to the chloroplast. In terms of biological role, binds 16S rRNA, required for the assembly of 30S particles. This is Small ribosomal subunit protein uS14c from Cyanidium caldarium (Red alga).